A 314-amino-acid chain; its full sequence is Ferrochelatase (314 aa).

2 residues coordinate Fe cation: His-184 and Glu-259.

Belongs to the ferrochelatase family.

It is found in the cytoplasm. The catalysed reaction is heme b + 2 H(+) = protoporphyrin IX + Fe(2+). Its pathway is porphyrin-containing compound metabolism; protoheme biosynthesis; protoheme from protoporphyrin-IX: step 1/1. Catalyzes the ferrous insertion into protoporphyrin IX. The polypeptide is Ferrochelatase (Chlamydia trachomatis serovar L2 (strain ATCC VR-902B / DSM 19102 / 434/Bu)).